An 85-amino-acid chain; its full sequence is Glutaredoxin 1 (85 aa).

The Glutaredoxin domain maps to methionine 1–alanine 85. A disulfide bond links cysteine 11 and cysteine 14.

This sequence belongs to the glutaredoxin family. In terms of assembly, monomer.

The disulfide bond functions as an electron carrier in the glutathione-dependent synthesis of deoxyribonucleotides by the enzyme ribonucleotide reductase. In addition, it is also involved in reducing some disulfides in a coupled system with glutathione reductase. In Shigella flexneri, this protein is Glutaredoxin 1 (grxA).